The sequence spans 175 residues: Large ribosomal subunit protein uL10 (175 aa).

The protein belongs to the universal ribosomal protein uL10 family. Part of the ribosomal stalk of the 50S ribosomal subunit. The N-terminus interacts with L11 and the large rRNA to form the base of the stalk. The C-terminus forms an elongated spine to which L12 dimers bind in a sequential fashion forming a multimeric L10(L12)X complex.

Its function is as follows. Forms part of the ribosomal stalk, playing a central role in the interaction of the ribosome with GTP-bound translation factors. The protein is Large ribosomal subunit protein uL10 of Thermobifida fusca (strain YX).